Reading from the N-terminus, the 316-residue chain is 4-hydroxy-3-methylbut-2-enyl diphosphate reductase (316 aa).

Cysteine 12 serves as a coordination point for [4Fe-4S] cluster. Positions 41 and 74 each coordinate (2E)-4-hydroxy-3-methylbut-2-enyl diphosphate. Residues histidine 41 and histidine 74 each coordinate dimethylallyl diphosphate. Isopentenyl diphosphate-binding residues include histidine 41 and histidine 74. Residue cysteine 96 coordinates [4Fe-4S] cluster. (2E)-4-hydroxy-3-methylbut-2-enyl diphosphate is bound at residue histidine 124. Position 124 (histidine 124) interacts with dimethylallyl diphosphate. Residue histidine 124 coordinates isopentenyl diphosphate. The active-site Proton donor is the glutamate 126. Position 167 (threonine 167) interacts with (2E)-4-hydroxy-3-methylbut-2-enyl diphosphate. Cysteine 197 provides a ligand contact to [4Fe-4S] cluster. (2E)-4-hydroxy-3-methylbut-2-enyl diphosphate contacts are provided by serine 225, serine 226, asparagine 227, and serine 269. Dimethylallyl diphosphate is bound by residues serine 225, serine 226, asparagine 227, and serine 269. Isopentenyl diphosphate is bound by residues serine 225, serine 226, asparagine 227, and serine 269.

The protein belongs to the IspH family. As to quaternary structure, homodimer. The cofactor is [4Fe-4S] cluster.

The enzyme catalyses isopentenyl diphosphate + 2 oxidized [2Fe-2S]-[ferredoxin] + H2O = (2E)-4-hydroxy-3-methylbut-2-enyl diphosphate + 2 reduced [2Fe-2S]-[ferredoxin] + 2 H(+). It carries out the reaction dimethylallyl diphosphate + 2 oxidized [2Fe-2S]-[ferredoxin] + H2O = (2E)-4-hydroxy-3-methylbut-2-enyl diphosphate + 2 reduced [2Fe-2S]-[ferredoxin] + 2 H(+). The protein operates within isoprenoid biosynthesis; dimethylallyl diphosphate biosynthesis; dimethylallyl diphosphate from (2E)-4-hydroxy-3-methylbutenyl diphosphate: step 1/1. It participates in isoprenoid biosynthesis; isopentenyl diphosphate biosynthesis via DXP pathway; isopentenyl diphosphate from 1-deoxy-D-xylulose 5-phosphate: step 6/6. Functionally, catalyzes the conversion of 1-hydroxy-2-methyl-2-(E)-butenyl 4-diphosphate (HMBPP) into a mixture of isopentenyl diphosphate (IPP) and dimethylallyl diphosphate (DMAPP). Acts in the terminal step of the DOXP/MEP pathway for isoprenoid precursor biosynthesis. This chain is 4-hydroxy-3-methylbut-2-enyl diphosphate reductase, found in Cronobacter sakazakii (strain ATCC BAA-894) (Enterobacter sakazakii).